A 565-amino-acid chain; its full sequence is NAD-dependent malic enzyme (565 aa).

The active-site Proton donor is the Tyr-104. Arg-157 contributes to the NAD(+) binding site. Lys-175 (proton acceptor) is an active-site residue. Positions 246, 247, and 270 each coordinate a divalent metal cation. Asp-270 and Asn-418 together coordinate NAD(+).

Belongs to the malic enzymes family. As to quaternary structure, homotetramer. The cofactor is Mg(2+). Mn(2+) is required as a cofactor.

The catalysed reaction is (S)-malate + NAD(+) = pyruvate + CO2 + NADH. It carries out the reaction oxaloacetate + H(+) = pyruvate + CO2. This chain is NAD-dependent malic enzyme, found in Klebsiella pneumoniae subsp. pneumoniae (strain ATCC 700721 / MGH 78578).